Reading from the N-terminus, the 202-residue chain is Outer-membrane lipoprotein carrier protein (202 aa).

The signal sequence occupies residues 1-18 (MNRLFLILLLIFSHEVFS).

It belongs to the LolA family. As to quaternary structure, monomer.

Its subcellular location is the periplasm. Functionally, participates in the translocation of lipoproteins from the inner membrane to the outer membrane. Only forms a complex with a lipoprotein if the residue after the N-terminal Cys is not an aspartate (The Asp acts as a targeting signal to indicate that the lipoprotein should stay in the inner membrane). This chain is Outer-membrane lipoprotein carrier protein, found in Legionella pneumophila (strain Lens).